The chain runs to 372 residues: MKYDLIIIGSGSVGAAAGYYATRAGLNVLMTDAHMPPHQHGSHHGDTRLIRHAYGEGEKYVPLVLRAQTLWDDLSRHNEDDPIFVRSGVINLGPADSAFLANVAHSAEQWQLNVEKLDAQGIMARWPEIRVPDNYIGLFETDSGFLRSELAIKTWIQLAKEAGCAQLFNCPVTAIRHDDDGVTIETADGEYQAKKAIVCAGTWVKDLLPELPVQPVRKVFAWYQADGRYSVKNKFPAFTGELPNGDQYYGFPAENDALKIGKHNGGQVIHSADERVPFAEVVSDGSEAFPFLRNVLPGIGCCLYGAACTYDNSPDEDFIIDTLPGHDNTLLITGLSGHGFKFASVLGEIAADFAQDKKSDFDLTPFSLSRFQ.

Residue 4–34 coordinates FAD; the sequence is DLIIIGSGSVGAAAGYYATRAGLNVLMTDAH. S-8alpha-FAD cysteine is present on Cys-308.

This sequence belongs to the MSOX/MTOX family. MTOX subfamily. As to quaternary structure, monomer. Requires FAD as cofactor.

The enzyme catalyses N(alpha)-methyl-L-tryptophan + O2 + H2O = L-tryptophan + formaldehyde + H2O2. In terms of biological role, catalyzes the oxidative demethylation of N-methyl-L-tryptophan. This Escherichia coli O157:H7 protein is N-methyl-L-tryptophan oxidase.